A 97-amino-acid chain; its full sequence is MKLTNYDIIRRPLITEKTMASMADKKYTFVVDIHANKSQIKNAIETIFDVKVEDVKTARIMGKTKRVGVHIGKRPDYKKAIVKLTEDSKTIEFFEGL.

It belongs to the universal ribosomal protein uL23 family. In terms of assembly, part of the 50S ribosomal subunit. Contacts protein L29, and trigger factor when it is bound to the ribosome.

One of the early assembly proteins it binds 23S rRNA. One of the proteins that surrounds the polypeptide exit tunnel on the outside of the ribosome. Forms the main docking site for trigger factor binding to the ribosome. The sequence is that of Large ribosomal subunit protein uL23 from Clostridium botulinum (strain ATCC 19397 / Type A).